A 293-amino-acid chain; its full sequence is Zinc finger protein 80 (293 aa).

2 C2H2-type zinc fingers span residues 69–91 (YKCK…HQIH) and 97–119 (YECQ…MRIH). Residues 125–147 (CKCVECGKVFNRRSHLLCYHQIH) form a C2H2-type 3; atypical zinc finger. 4 C2H2-type zinc fingers span residues 153 to 175 (YECS…RMTH), 181 to 203 (FGCK…MKIH), 209 to 231 (YKCG…SMTH), and 237 to 259 (YECK…TRSH).

Belongs to the krueppel C2H2-type zinc-finger protein family.

It localises to the nucleus. Functionally, may be involved in transcriptional regulation. This is Zinc finger protein 80 (ZNF80) from Macaca mulatta (Rhesus macaque).